The chain runs to 439 residues: Protein dumpy-20 (439 aa).

Residues 93–116 are disordered; it reads GTLSDPSLHGSNSSSSTSDVGSSV. Residues 96–116 show a composition bias toward low complexity; that stretch reads SDPSLHGSNSSSSTSDVGSSV. 2 BED-type zinc fingers span residues 135 to 184 and 349 to 398; these read PTEN…YQKV and KTEH…YNDV. 8 residues coordinate Zn(2+): Cys154, Cys157, His172, His177, Cys368, Cys371, His386, and His391.

Involved in cuticle function and is essential for normal morphological development. The protein is Protein dumpy-20 (dpy-20) of Caenorhabditis briggsae.